Consider the following 417-residue polypeptide: Gamma-glutamyl phosphate reductase (417 aa).

Belongs to the gamma-glutamyl phosphate reductase family.

Its subcellular location is the cytoplasm. It catalyses the reaction L-glutamate 5-semialdehyde + phosphate + NADP(+) = L-glutamyl 5-phosphate + NADPH + H(+). It participates in amino-acid biosynthesis; L-proline biosynthesis; L-glutamate 5-semialdehyde from L-glutamate: step 2/2. Its function is as follows. Catalyzes the NADPH-dependent reduction of L-glutamate 5-phosphate into L-glutamate 5-semialdehyde and phosphate. The product spontaneously undergoes cyclization to form 1-pyrroline-5-carboxylate. The polypeptide is Gamma-glutamyl phosphate reductase (Legionella pneumophila subsp. pneumophila (strain Philadelphia 1 / ATCC 33152 / DSM 7513)).